Consider the following 1024-residue polypeptide: Beta-galactosidase (1024 aa).

Substrate-binding residues include Asn103 and Asp202. A Na(+)-binding site is contributed by Asp202. Residues Glu417, His419, and Glu462 each contribute to the Mg(2+) site. Substrate contacts are provided by residues Glu462 and 538 to 541; that span reads EYAH. Glu462 functions as the Proton donor in the catalytic mechanism. The Nucleophile role is filled by Glu538. Mg(2+) is bound at residue Asn598. Na(+)-binding residues include Phe602 and Asn605. Residues Asn605 and Trp1000 each coordinate substrate.

It belongs to the glycosyl hydrolase 2 family. In terms of assembly, homotetramer. Mg(2+) serves as cofactor. Requires Na(+) as cofactor.

The catalysed reaction is Hydrolysis of terminal non-reducing beta-D-galactose residues in beta-D-galactosides.. This is Beta-galactosidase from Escherichia coli O127:H6 (strain E2348/69 / EPEC).